A 610-amino-acid polypeptide reads, in one-letter code: Sodium-coupled monocarboxylate transporter 1 (610 aa).

Topologically, residues 1–9 are extracellular; the sequence is MDTPRGIGT. The helical transmembrane segment at 10–30 threads the bilayer; sequence FVVWDYVVFAGMLVISAAIGI. Residues 31 to 51 lie on the Cytoplasmic side of the membrane; sequence YYAFAGGGQQTSKDFLMGGRR. The helical transmembrane segment at 52-72 threads the bilayer; sequence MTAVPVALSLTASFMSAVTVL. The Extracellular portion of the chain corresponds to 73–83; that stretch reads GTPSEVYRFGA. The helical transmembrane segment at 84 to 104 threads the bilayer; that stretch reads IFSIFAFTYFFVVVISAEVFL. Residues 105–132 lie on the Cytoplasmic side of the membrane; sequence PVFYKLGITSTYEYLELRFNKCVRLCGT. A helical transmembrane segment spans residues 133 to 153; the sequence is VLFIVQTILYTGIVIYAPALA. Residues 154 to 161 lie on the Extracellular side of the membrane; that stretch reads LNQVTGFD. A helical membrane pass occupies residues 162–182; that stretch reads LWGAVVATGVVCTFYCTLGGL. The Cytoplasmic segment spans residues 183-189; it reads KAVIWTD. The chain crosses the membrane as a helical span at residues 190–210; it reads VFQVGIMVAGFASVIIQAVVM. The Extracellular portion of the chain corresponds to 211-239; it reads QGGISTILNDAYDGGRLNFWNFNPNPLQR. The chain crosses the membrane as a helical span at residues 240–260; that stretch reads HTFWTIIIGGTFTWTSIYGVN. At 261 to 279 the chain is on the cytoplasmic side; sequence QSQVQRYISCKSRFQAKLS. Residues 280-300 form a helical membrane-spanning segment; the sequence is LYINLVGLWAILTCSVFCGLA. The Extracellular segment spans residues 301-336; that stretch reads LYSRYHDCDPWTAKKVSAPDQLMPYLVLDILQDYPG. Residues 337-359 form a helical membrane-spanning segment; it reads LPGLFVACAYSGTLSTVSSSINA. The Cytoplasmic portion of the chain corresponds to 360 to 389; the sequence is LAAVTVEDLIKPYFRSLSERSLSWISQGMS. Residues 390–410 traverse the membrane as a helical segment; that stretch reads VVYGALCIGMAALASLMGALL. Residues 411–415 lie on the Extracellular side of the membrane; that stretch reads QAALS. Residues 416–436 form a helical membrane-spanning segment; the sequence is VFGMVGGPLMGLFALGILVPF. Residues 437–439 are Cytoplasmic-facing; it reads ANS. Residues 440–460 traverse the membrane as a helical segment; the sequence is IGALVGLMAGFAISLWVGIGA. Topologically, residues 461–518 are extracellular; the sequence is QIYPPLPERTLPLHLDIQGCNSTYNETNLMTTTEMPFTTSVFQIYNVQRTPLMDNWYS. The N-linked (GlcNAc...) asparagine glycan is linked to N485. A helical transmembrane segment spans residues 519–539; sequence LSYLYFSTVGTLVTLLVGILV. Residues 540-610 lie on the Cytoplasmic side of the membrane; it reads SLSTGGRKQN…QSGKSNGTRL (71 aa). The segment at 585-610 is disordered; that stretch reads GGTDNPAFNHIELNSDQSGKSNGTRL. Over residues 596 to 610 the composition is skewed to polar residues; it reads ELNSDQSGKSNGTRL. The PDZ-binding motif lies at 608–610; it reads TRL.

This sequence belongs to the sodium:solute symporter (SSF) (TC 2.A.21) family. Interacts (via PDZ-binding motif) with PDZK1 (via PDZ domains 1 and 3); interaction increases nicotinate transport activity of SLC5A8. In terms of tissue distribution, expressed in normal thyroid, localized at the apical pole of thyroid cells facing the colloid lumen, but expression profoundly decreased in thyroid carcinomas. Expressed in normal colon but absent in colon aberrant crypt foci and colon cancers. Present in normal kidney cortex, brain, prostate, gastric mucosa and breast tissue but was significantly down-regulated in primary gliomas, gastric cancer, prostate tumors and breast tumors.

It localises to the apical cell membrane. The catalysed reaction is (S)-lactate(out) + 2 Na(+)(out) = (S)-lactate(in) + 2 Na(+)(in). It catalyses the reaction propanoate(out) + 2 Na(+)(out) = propanoate(in) + 2 Na(+)(in). The enzyme catalyses pyruvate(out) + 2 Na(+)(out) = pyruvate(in) + 2 Na(+)(in). It carries out the reaction acetate(out) + 2 Na(+)(out) = acetate(in) + 2 Na(+)(in). The catalysed reaction is butanoate(out) + 2 Na(+)(out) = butanoate(in) + 2 Na(+)(in). It catalyses the reaction nicotinate(out) + 2 Na(+)(out) = nicotinate(in) + 2 Na(+)(in). The enzyme catalyses (R)-3-hydroxybutanoate(out) + 2 Na(+)(out) = (R)-3-hydroxybutanoate(in) + 2 Na(+)(in). It carries out the reaction acetoacetate(out) + 2 Na(+)(out) = acetoacetate(in) + 2 Na(+)(in). The catalysed reaction is 4-methyl-2-oxopentanoate(out) + 2 Na(+)(out) = 4-methyl-2-oxopentanoate(in) + 2 Na(+)(in). It catalyses the reaction 5-oxo-L-proline(out) + 2 Na(+)(out) = 5-oxo-L-proline(in) + 2 Na(+)(in). The enzyme catalyses iodide(out) = iodide(in). It carries out the reaction chloride(in) = chloride(out). The catalysed reaction is nitrate(in) = nitrate(out). It catalyses the reaction bromide(in) = bromide(out). Its activity is regulated as follows. Increase of iodide influx inhibited by addition of perchlorate (NaClO(4)), a competitive inhibitor of iodide uptake catalyzed by sodium iodide symporter (NIS). Cotransport of monocarboxylates and nicotinate strongly inhibited by probenecid, nonsteroid anti-inflammatory drugs (ibuprofen, fenoprofen, ketprofen, naproxen) in a Na(+)-dependent manner or by prolonged exposure to external concentrations of monocarboxylates. Its function is as follows. Acts as an electrogenic sodium (Na(+)) and chloride (Cl-)-dependent sodium-coupled solute transporter, including transport of monocarboxylates (short-chain fatty acids including L-lactate, D-lactate, pyruvate, acetate, propionate, valerate and butyrate), mocarboxylate drugs (nicotinate, benzoate, salicylate and 5-aminosalicylate) and ketone bodies (beta-D-hydroxybutyrate, acetoacetate and alpha-ketoisocaproate), with a Na(+):substrate stoichiometry of between 4:1 and 2:1. Catalyzes passive carrier mediated diffusion of iodide. Mediates iodide transport from the thyrocyte into the colloid lumen through the apical membrane. May be responsible for the absorption of D-lactate and monocarboxylate drugs from the intestinal tract. Acts as a tumor suppressor, suppressing colony formation in colon cancer, prostate cancer and glioma cell lines. May play a critical role in the entry of L-lactate and ketone bodies into neurons by a process driven by an electrochemical Na(+) gradient and hence contribute to the maintenance of the energy status and function of neurons. Mediates sodium-coupled electrogenic transport of pyroglutamate (5-oxo-L-proline). Can mediate the transport of chloride, bromide, iodide and nitrate ions when the external concentration of sodium ions is reduced. The chain is Sodium-coupled monocarboxylate transporter 1 from Homo sapiens (Human).